The primary structure comprises 521 residues: U4/U6 small nuclear ribonucleoprotein Prp4 (521 aa).

Lys-26 is subject to N6-acetyllysine. WD repeat units follow at residues 229–268 (DDRP…LHTL), 271–318 (HNTN…VADI), 321–360 (HTVR…ILHQ), 363–402 (HSMG…IMFL), 405–444 (HLKE…VYTI), 447–487 (HQNL…LKTL), and 490–521 (HEGK…WMAE).

As to quaternary structure, component of the precatalytic spliceosome (spliceosome B complex). Component of the U4/U6-U5 tri-snRNP complex, a building block of the precatalytic spliceosome (spliceosome B complex). The U4/U6-U5 tri-snRNP complex is composed of the U4, U6 and U5 snRNAs and at least PRPF3, PRPF4, PRPF6, PRPF8, PRPF31, SNRNP200, TXNL4A, SNRNP40, SNRPB, SNRPD1, SNRPD2, SNRPD3, SNRPE, SNRPF, SNRPG, DDX23, CD2BP2, PPIH, SNU13, EFTUD2, SART1 and USP39, plus LSM2, LSM3, LSM4, LSM5, LSM6, LSM7 and LSM8. Interacts directly with PRPF18, PPIH and PRPF3. Part of a heteromeric complex containing PPIH, PRPF3 and PRPF4 that is stable in the absence of RNA. Interacts with ERCC6.

It is found in the nucleus. The protein resides in the nucleus speckle. Plays a role in pre-mRNA splicing as component of the U4/U6-U5 tri-snRNP complex that is involved in spliceosome assembly, and as component of the precatalytic spliceosome (spliceosome B complex). This is U4/U6 small nuclear ribonucleoprotein Prp4 (PRPF4) from Bos taurus (Bovine).